A 630-amino-acid polypeptide reads, in one-letter code: Neuronal acetylcholine receptor subunit alpha-4 (630 aa).

An N-terminal signal peptide occupies residues 1 to 30 (MANSGTGAPPPLLLLPLLLLLGTGLLPASS). The Extracellular portion of the chain corresponds to 32-249 (IETRAHAEER…IIRRLPLFYT (218 aa)). The N-linked (GlcNAc...) asparagine glycan is linked to Asn59. Ca(2+) contacts are provided by Val78 and Glu80. Asn109 and Asn176 each carry an N-linked (GlcNAc...) asparagine glycan. 2 disulfide bridges follow: Cys163-Cys177 and Cys227-Cys228. The helical transmembrane segment at 250–270 (INLIIPCLLISCLTVLVFYLP) threads the bilayer. Cys273 is lipidated: S-palmitoyl cysteine. The next 2 helical transmembrane spans lie at 279-299 (LCIS…EIIP) and 313-333 (LLFT…VLNV). The Cytoplasmic segment spans residues 334–604 (HHRSPRTHTM…WKYVAMVIDR (271 aa)). 2 disordered regions span residues 418 to 463 (TAVE…SGAP) and 505 to 526 (SLAD…SQLP). A Phosphoserine modification is found at Ser428. A compositionally biased stretch (basic and acidic residues) spans 434–443 (PDLKTSEVEK). Pro residues predominate over residues 447–457 (CPSPGSCPPPK). Ser542 and Ser545 each carry phosphoserine. Residues 605–625 (IFLWMFIIVCLLGTVGLFLPP) traverse the membrane as a helical segment.

This sequence belongs to the ligand-gated ion channel (TC 1.A.9) family. Acetylcholine receptor (TC 1.A.9.1) subfamily. Alpha-4/CHRNA4 sub-subfamily. Neuronal AChR is composed of two different types of subunits: alpha and beta. CHRNA4 forms heteropentameric neuronal acetylcholine receptors with CHRNB2 and CHRNB4, as well as CHRNA5 and CHRNB3 as accesory subunits. Found in two major stoichiometric forms, LS (low agonist sensitivity): (CHRNA4)3:(CHRNB2)2 and HS (high agonist sensitivity): (CHRNA4)2:(CHRNB2)3, the two stoichiometric forms differ in their unitary conductance, calcium permeability, ACh sensitivity and potentiation by divalent cation. Cells produce predominantly an (CHRNA4)3:(CHRNB2)2 nAChR. The (CHRNA4)2:(CHRNB2)3 expression is selectively up-regulated by nicotine and has lower single channel conductance and calcium permeability. In the striatum, also forms CHRNA4:CHRNA6:CHRNB2 complexes. Also found in the stoichiometric form: (CHRNA4:CHRNB2)2:CHRNB3. Interacts with RIC3; which is required for proper folding and assembly. Interacts with LYPD6. As to expression, in various regions of the central nervous system. Expressed in hippocampal neurons.

The protein resides in the presynaptic cell membrane. Its subcellular location is the cell membrane. It carries out the reaction Ca(2+)(in) = Ca(2+)(out). The catalysed reaction is K(+)(in) = K(+)(out). The enzyme catalyses Na(+)(in) = Na(+)(out). With respect to regulation, activated by a myriad of ligands such as acetylcholine, cytisine, nicotine, choline and epibatidine. Channel potentiation by calcium is stoichiometry-selective, CHRNA4:CHRNB2 nACh receptor is achieved by calcium association with topographically distinct sites framed by anionic residues within the CHRNA4 subunit and between the CHRNA4 and CHRNB2 subunits. nAChR activity is inhibited by the antagonist alpha-conotoxins BuIA, PnIA, GID and MII, small disulfide-constrained peptides from cone snails. In terms of biological role, component of neuronal acetylcholine receptors (nAChRs) that function as pentameric, ligand-gated cation channels with high calcium permeability among other activities. nAChRs are excitatory neurotrasnmitter receptors formed by a collection of nAChR subunits known to mediate synaptic transmission in the nervous system and the neuromuscular junction. Each nAchR subunit confers differential attributes to channel properties, including activation, deactivation and desensitization kinetics, pH sensitivity, cation permeability, and binding to allosteric modulators. CHRNA4 forms heteropentameric neuronal acetylcholine receptors with CHRNB2 and CHRNB4, as well as CHRNA5 and CHRNB3 as accesory subunits. Is the most abundant nAChR subtype expressed in the central nervous system. Found in two major stoichiometric forms,(CHRNA4)3:(CHRNB2)2 and (CHRNA4)2:(CHRNB2)3, the two stoichiometric forms differ in their unitary conductance, calcium permeability, ACh sensitivity and potentiation by divalent cation. Involved in the modulation of calcium-dependent signaling pathways, influences the release of neurotransmitters, including dopamine, glutamate and GABA. The polypeptide is Neuronal acetylcholine receptor subunit alpha-4 (Chrna4) (Rattus norvegicus (Rat)).